A 249-amino-acid polypeptide reads, in one-letter code: 23S rRNA (guanosine-2'-O-)-methyltransferase RlmB (249 aa).

Residues G200, I220, and L229 each coordinate S-adenosyl-L-methionine.

Belongs to the class IV-like SAM-binding methyltransferase superfamily. RNA methyltransferase TrmH family. RlmB subfamily.

It is found in the cytoplasm. It carries out the reaction guanosine(2251) in 23S rRNA + S-adenosyl-L-methionine = 2'-O-methylguanosine(2251) in 23S rRNA + S-adenosyl-L-homocysteine + H(+). Its function is as follows. Specifically methylates the ribose of guanosine 2251 in 23S rRNA. This chain is 23S rRNA (guanosine-2'-O-)-methyltransferase RlmB, found in Xylella fastidiosa (strain 9a5c).